A 164-amino-acid polypeptide reads, in one-letter code: Thiol peroxidase (164 aa).

In terms of domain architecture, Thioredoxin spans 16–162 (LQVGDIAKDF…YEAAINAAKI (147 aa)). Cys58 functions as the Cysteine sulfenic acid (-SOH) intermediate in the catalytic mechanism. Cys58 and Cys92 are joined by a disulfide.

The protein belongs to the peroxiredoxin family. Tpx subfamily. Homodimer.

The catalysed reaction is a hydroperoxide + [thioredoxin]-dithiol = an alcohol + [thioredoxin]-disulfide + H2O. Functionally, thiol-specific peroxidase that catalyzes the reduction of hydrogen peroxide and organic hydroperoxides to water and alcohols, respectively. Plays a role in cell protection against oxidative stress by detoxifying peroxides. This is Thiol peroxidase from Streptococcus agalactiae serotype V (strain ATCC BAA-611 / 2603 V/R).